Reading from the N-terminus, the 453-residue chain is Bifunctional protein GlmU (453 aa).

Residues 1–227 (MTQDIVILAA…EAEVAGVNDR (227 aa)) are pyrophosphorylase. UDP-N-acetyl-alpha-D-glucosamine is bound by residues 8-11 (LAAG), Lys-22, Gln-73, 78-79 (GT), 100-102 (YGD), Gly-137, Glu-152, Asn-167, and Asn-225. Asp-102 contributes to the Mg(2+) binding site. Mg(2+) is bound at residue Asn-225. Positions 228–248 (VQLAALERELQNQQAVSLMQN) are linker. Residues 249–453 (GATLLDPSRI…KDNWPRPIKK (205 aa)) form an N-acetyltransferase region. Residues Arg-331 and Lys-349 each coordinate UDP-N-acetyl-alpha-D-glucosamine. His-361 functions as the Proton acceptor in the catalytic mechanism. UDP-N-acetyl-alpha-D-glucosamine-binding residues include Tyr-364 and Asn-375. Acetyl-CoA-binding positions include Ala-378, 384-385 (NY), Ser-403, Ala-421, and Arg-438.

It in the N-terminal section; belongs to the N-acetylglucosamine-1-phosphate uridyltransferase family. In the C-terminal section; belongs to the transferase hexapeptide repeat family. Homotrimer. The cofactor is Mg(2+).

The protein localises to the cytoplasm. The catalysed reaction is alpha-D-glucosamine 1-phosphate + acetyl-CoA = N-acetyl-alpha-D-glucosamine 1-phosphate + CoA + H(+). It carries out the reaction N-acetyl-alpha-D-glucosamine 1-phosphate + UTP + H(+) = UDP-N-acetyl-alpha-D-glucosamine + diphosphate. It functions in the pathway nucleotide-sugar biosynthesis; UDP-N-acetyl-alpha-D-glucosamine biosynthesis; N-acetyl-alpha-D-glucosamine 1-phosphate from alpha-D-glucosamine 6-phosphate (route II): step 2/2. The protein operates within nucleotide-sugar biosynthesis; UDP-N-acetyl-alpha-D-glucosamine biosynthesis; UDP-N-acetyl-alpha-D-glucosamine from N-acetyl-alpha-D-glucosamine 1-phosphate: step 1/1. Its pathway is bacterial outer membrane biogenesis; LPS lipid A biosynthesis. Catalyzes the last two sequential reactions in the de novo biosynthetic pathway for UDP-N-acetylglucosamine (UDP-GlcNAc). The C-terminal domain catalyzes the transfer of acetyl group from acetyl coenzyme A to glucosamine-1-phosphate (GlcN-1-P) to produce N-acetylglucosamine-1-phosphate (GlcNAc-1-P), which is converted into UDP-GlcNAc by the transfer of uridine 5-monophosphate (from uridine 5-triphosphate), a reaction catalyzed by the N-terminal domain. This chain is Bifunctional protein GlmU, found in Marinomonas sp. (strain MWYL1).